Reading from the N-terminus, the 694-residue chain is Junctophilin-2 (694 aa).

Topologically, residues 1-672 (MSGGRFDFDD…EVEVEEVPNT (672 aa)) are cytoplasmic. 6 MORN repeats span residues 14-36 (YCGG…KGQG), 38-59 (YSGS…SGNT), 60-79 (FEGY…TKGR), 82-104 (YKGE…SSGA), 106-128 (YEGT…DGGT), and 129-151 (YQGQ…PYGM). S162 and S165 each carry phosphoserine. 2 disordered regions span residues 164–192 (SSLR…ALPS) and 231–278 (RAES…AAPF). Over residues 176 to 189 (APDSPASPAADGPA) the composition is skewed to low complexity. Residues 235 to 244 (RTSVGSQRSR) are compositionally biased toward polar residues. Residues 250 to 267 (SDLSSGASDAASTASLGE) are compositionally biased toward low complexity. MORN repeat units lie at residues 290–312 (YMGE…SGLR) and 313–335 (YEGE…DGHR). A Bipartite nuclear localization signal motif is present at residues 350 to 364 (KRRVLPLKSNKVRQK). Phosphoserine is present on residues S445, S447, and S466. Positions 448–663 (LLEPPDRGAA…KEAAQAAEAE (216 aa)) are disordered. Basic and acidic residues predominate over residues 467–476 (PQLHERETPR). Position 474 is a phosphothreonine (T474). A compositionally biased stretch (pro residues) spans 478 to 491 (EGGPPSPAGTPPQP). A Phosphoserine modification is found at S483. At T487 the chain carries Phosphothreonine. The Nuclear localization signal motif lies at 492–496 (KRPRP). Residues 522–540 (SRPATPAAAGAGRRSPARP) are compositionally biased toward low complexity. A phosphoserine mark is found at S536, S542, S596, and S600. The span at 589 to 610 (PEAADPDSAPASPATAPGQAPA) shows a compositional bias: low complexity. A helical; Anchor for type IV membrane protein transmembrane segment spans residues 673–693 (VLICMVILLNIGLAILFVHLL).

Belongs to the junctophilin family. As to quaternary structure, interacts with TRPC3. Interacts with BAG5 and HSPA8; the interaction with HSPA8 is increased in the presence of BAG5. Junctophilin-2 N-terminal fragment: Interacts with MEF2C. Post-translationally, proteolytically cleaved by calpain in response to cardiac stress. The major cleavage site takes place at the C-terminus and leads to the release of the Junctophilin-2 N-terminal fragment chain (JP2NT). Phosphorylation on Ser-165, probably by PKC, affects RYR1-mediated calcium ion release, interaction with TRPC3, and skeletal muscle myotubule development.

Its subcellular location is the cell membrane. It is found in the sarcoplasmic reticulum membrane. The protein resides in the endoplasmic reticulum membrane. The protein localises to the nucleus. Membrane-binding protein that provides a structural bridge between the plasma membrane and the sarcoplasmic reticulum and is required for normal excitation-contraction coupling in cardiomyocytes. Provides a structural foundation for functional cross-talk between the cell surface and intracellular Ca(2+) release channels by maintaining the 12-15 nm gap between the sarcolemma and the sarcoplasmic reticulum membranes in the cardiac dyads. Necessary for proper intracellular Ca(2+) signaling in cardiac myocytes via its involvement in ryanodine receptor-mediated calcium ion release. Contributes to the construction of skeletal muscle triad junctions. In terms of biological role, transcription repressor required to safeguard against the deleterious effects of cardiac stress. Generated following cleavage of the Junctophilin-2 chain by calpain in response to cardiac stress in cardiomyocytes. Following cleavage and release from the membrane, translocates to the nucleus, binds DNA and represses expression of genes implicated in cell growth and differentiation, hypertrophy, inflammation and fibrosis. Modifies the transcription profile and thereby attenuates pathological remodeling in response to cardiac stress. Probably acts by competing with MEF2 transcription factors and TATA-binding proteins. This Oryctolagus cuniculus (Rabbit) protein is Junctophilin-2 (JPH2).